The following is a 450-amino-acid chain: Tripartite motif-containing protein 64C (450 aa).

The RING-type zinc-finger motif lies at 15 to 56 (CCICVNYFIDPVTTDCVHSFCRPCLCLCSEEGRAPMRCPLCR). The segment at 87–128 (SSDNICVLHEETKELFCEADKRLLCGPCSESPEHMAHSHSPI) adopts a B box-type zinc-finger fold. Residues Cys-92, His-95, Cys-114, and His-120 each contribute to the Zn(2+) site. Positions 191–218 (DEEEQRHLQALEREAKELFQQLQDSQVR) form a coiled coil. Residues 269 to 450 (ELTSWCITGV…LRPFFCFGCT (182 aa)) enclose the B30.2/SPRY domain.

This sequence belongs to the TRIM/RBCC family.

This is Tripartite motif-containing protein 64C (TRIM64C) from Homo sapiens (Human).